The sequence spans 440 residues: Xaa-Pro dipeptidase (440 aa).

Mn(2+)-binding residues include D246, D257, H337, E382, and E421.

Belongs to the peptidase M24B family. Bacterial-type prolidase subfamily. It depends on Mn(2+) as a cofactor.

The catalysed reaction is Xaa-L-Pro dipeptide + H2O = an L-alpha-amino acid + L-proline. Its function is as follows. Splits dipeptides with a prolyl residue in the C-terminal position. This Aeromonas hydrophila subsp. hydrophila (strain ATCC 7966 / DSM 30187 / BCRC 13018 / CCUG 14551 / JCM 1027 / KCTC 2358 / NCIMB 9240 / NCTC 8049) protein is Xaa-Pro dipeptidase.